A 66-amino-acid polypeptide reads, in one-letter code: Clusterin (66 aa).

The protein belongs to the clusterin family. Antiparallel disulfide-linked heterodimer of an alpha chain and a beta chain. Self-associates and forms higher oligomers. Interacts with a broad range of misfolded proteins, including APP, APOC2 and LYZ. Slightly acidic pH promotes interaction with misfolded proteins. Forms high-molecular weight oligomers upon interaction with misfolded proteins. Interacts with APOA1, LRP2, CLUAP1 and PON1. Interacts with the complement membrane attack complex. Interacts (via alpha chain) with XRCC6. Interacts with SYVN1, COMMD1, BTRC, CUL1 and with ubiquitin and SCF (SKP1-CUL1-F-box protein) E3 ubiquitin-protein ligase complexes. Interacts (via alpha chain) with BAX in stressed cells, where BAX undergoes a conformation change leading to association with the mitochondrial membrane. Does not interact with BAX in unstressed cells. Found in a complex with LTF, CLU, EPPIN and SEMG1. Interacts (immaturely glycosylated pre-secreted form) with HSPA5; this interaction promotes CLU stability and facilitates stress-induced CLU retrotranslocation from the secretory pathway to the mitochondria, thereby reducing stress-induced apoptosis by stabilizing mitochondrial membrane integrity. Interacts with BCL2L1; this interaction releases and activates BAX and promotes cell death. Interacts with TGFBR2 and ACVR1. Interacts (secreted form) with STMN3; this interaction may act as an important modulator during neuronal differentiation. Component of a epididymal complex at least composed of soluble form of prion protein PRNP, CLU, BPI, CES5A, MANBA and GLB1. Post-translationally, proteolytically cleaved on its way through the secretory system, probably within the Golgi lumen. Proteolytic cleavage is not necessary for its chaperone activity. All non-secreted forms are not proteolytically cleaved. Chaperone activity of uncleaved forms is dependent on a non-reducing environment. In terms of processing, polyubiquitinated, leading to proteasomal degradation. Under cellular stress, the intracellular level of cleaved form is reduced due to proteasomal degradation. Heavily N-glycosylated. About 30% of the protein mass is comprised of complex N-linked carbohydrate. Endoplasmic reticulum (ER) stress induces changes in glycosylation status and increases level of hypoglycosylated forms. Core carbohydrates are essential for chaperone activity. Non-secreted forms are hypoglycosylated or unglycosylated.

Its subcellular location is the secreted. The protein localises to the nucleus. The protein resides in the cytoplasm. It localises to the mitochondrion membrane. It is found in the cytosol. Its subcellular location is the microsome. The protein localises to the endoplasmic reticulum. The protein resides in the mitochondrion. It localises to the perinuclear region. It is found in the cytoplasmic vesicle. Its subcellular location is the secretory vesicle. The protein localises to the chromaffin granule. Functionally, functions as extracellular chaperone that prevents aggregation of non native proteins. Prevents stress-induced aggregation of blood plasma proteins. Inhibits formation of amyloid fibrils by APP, APOC2, B2M, CALCA, CSN3, SNCA and aggregation-prone LYZ variants (in vitro). Does not require ATP. Maintains partially unfolded proteins in a state appropriate for subsequent refolding by other chaperones, such as HSPA8/HSC70. Does not refold proteins by itself. Binding to cell surface receptors triggers internalization of the chaperone-client complex and subsequent lysosomal or proteasomal degradation. When secreted, protects cells against apoptosis and against cytolysis by complement: inhibits assembly of the complement membrane attack complex (MAC) by preventing polymerization of C9 pore component of the MAC complex. Intracellular forms interact with ubiquitin and SCF (SKP1-CUL1-F-box protein) E3 ubiquitin-protein ligase complexes and promote the ubiquitination and subsequent proteasomal degradation of target proteins. Promotes proteasomal degradation of COMMD1 and IKBKB. Modulates NF-kappa-B transcriptional activity. Following stress, promotes apoptosis. Inhibits apoptosis when associated with the mitochondrial membrane by interference with BAX-dependent release of cytochrome c into the cytoplasm. Plays a role in the regulation of cell proliferation. An intracellular form suppresses stress-induced apoptosis by stabilizing mitochondrial membrane integrity through interaction with HSPA5. Secreted form does not affect caspase or BAX-mediated intrinsic apoptosis and TNF-induced NF-kappa-B-activity. Secreted form act as an important modulator during neuronal differentiation through interaction with STMN3. Plays a role in the clearance of immune complexes that arise during cell injury. The polypeptide is Clusterin (CLU) (Ovis aries (Sheep)).